The chain runs to 301 residues: NAD kinase 2 (301 aa).

Catalysis depends on Asp-77, which acts as the Proton acceptor. NAD(+)-binding positions include 77–78, Arg-82, 151–152, Arg-162, Asp-181, and 192–197; these read DG, NE, and TAYAFS.

This sequence belongs to the NAD kinase family. Requires a divalent metal cation as cofactor.

The protein resides in the cytoplasm. It catalyses the reaction NAD(+) + ATP = ADP + NADP(+) + H(+). Its function is as follows. Involved in the regulation of the intracellular balance of NAD and NADP, and is a key enzyme in the biosynthesis of NADP. Catalyzes specifically the phosphorylation on 2'-hydroxyl of the adenosine moiety of NAD to yield NADP. The protein is NAD kinase 2 of Streptomyces avermitilis (strain ATCC 31267 / DSM 46492 / JCM 5070 / NBRC 14893 / NCIMB 12804 / NRRL 8165 / MA-4680).